The following is a 581-amino-acid chain: Proline--tRNA ligase (581 aa).

Belongs to the class-II aminoacyl-tRNA synthetase family. ProS type 1 subfamily. Homodimer.

The protein localises to the cytoplasm. It carries out the reaction tRNA(Pro) + L-proline + ATP = L-prolyl-tRNA(Pro) + AMP + diphosphate. Functionally, catalyzes the attachment of proline to tRNA(Pro) in a two-step reaction: proline is first activated by ATP to form Pro-AMP and then transferred to the acceptor end of tRNA(Pro). As ProRS can inadvertently accommodate and process non-cognate amino acids such as alanine and cysteine, to avoid such errors it has two additional distinct editing activities against alanine. One activity is designated as 'pretransfer' editing and involves the tRNA(Pro)-independent hydrolysis of activated Ala-AMP. The other activity is designated 'posttransfer' editing and involves deacylation of mischarged Ala-tRNA(Pro). The misacylated Cys-tRNA(Pro) is not edited by ProRS. The chain is Proline--tRNA ligase from Delftia acidovorans (strain DSM 14801 / SPH-1).